The sequence spans 270 residues: MRLSLFLSGLAAAGSIVSAERTCGAVPPRGYEKEFSEAFAALGPEATSDLTAGITIDTYLHVLTSGTTGNIPDSQLQAQINAMNQHYGPSGVQFRLVKATRTNNANWASGRDEAGMKSALHMGTYSSLNIYFIPNLSSGLLGICYFPRANPSQTTITMDGCMVRSGTVPGGETTNYNQGKTATHEVGHFLGLYHVFSENGSCVDADMVADTPPQSKKTSGCPNSQDSCPGGGVDSIHNYMDYSYDVCMNQFTRGQASRIAQAWQAFRAGH.

The N-terminal stretch at 1-19 (MRLSLFLSGLAAAGSIVSA) is a signal peptide. Asn135 carries N-linked (GlcNAc...) asparagine glycosylation. His184 provides a ligand contact to Zn(2+). Glu185 is an active-site residue. His188 lines the Zn(2+) pocket. N-linked (GlcNAc...) asparagine glycosylation is present at Asn199. The interval 208–227 (VADTPPQSKKTSGCPNSQDS) is disordered. Positions 212–227 (PPQSKKTSGCPNSQDS) are enriched in polar residues. Cys221 and Cys247 are disulfide-bonded.

Belongs to the peptidase M43B family.

Its subcellular location is the secreted. In terms of biological role, secreted metalloproteinase that allows assimilation of proteinaceous substrates. Plays a pivotal role as a pathogenicity determinant during infections and contributes to the ability of the pathogen to persist within the mammalian host. In Arthroderma otae (strain ATCC MYA-4605 / CBS 113480) (Microsporum canis), this protein is Extracellular metalloprotease MCYG_04966.